The following is an 84-amino-acid chain: U4-theraphotoxin-Hhn1a (84 aa).

The first 22 residues, 1 to 22 (MKVTLIAILTCAAVLVLHTTAA), serve as a signal peptide directing secretion. A propeptide spanning residues 23 to 47 (EELEESQLMEVGMPDTELAAVDGER) is cleaved from the precursor. Cystine bridges form between C51-C65, C55-C76, and C70-C81.

The protein belongs to the neurotoxin 12 (Hwtx-2) family. 02 (Hwtx-2) subfamily. As to expression, expressed by the venom gland.

The protein resides in the secreted. Functionally, postsynaptic neurotoxin. This Cyriopagopus hainanus (Chinese bird spider) protein is U4-theraphotoxin-Hhn1a.